The primary structure comprises 208 residues: GTP cyclohydrolase 1 (208 aa).

Residues C89, H92, and C163 each contribute to the Zn(2+) site.

The protein belongs to the GTP cyclohydrolase I family. As to quaternary structure, homomer.

The enzyme catalyses GTP + H2O = 7,8-dihydroneopterin 3'-triphosphate + formate + H(+). Its pathway is cofactor biosynthesis; 7,8-dihydroneopterin triphosphate biosynthesis; 7,8-dihydroneopterin triphosphate from GTP: step 1/1. The protein is GTP cyclohydrolase 1 of Saccharolobus islandicus (strain L.S.2.15 / Lassen #1) (Sulfolobus islandicus).